A 403-amino-acid polypeptide reads, in one-letter code: Ubiquitin-like modifier-activating enzyme 5 (403 aa).

Residues G81, D102, K125, N148, and N182 each coordinate ATP. Positions 224 and 227 each coordinate Zn(2+). The active-site Glycyl thioester intermediate is the C248. Zn(2+)-binding residues include C301 and C306. A UFM1-interacting sequence (UIS) motif is present at residues 333-345 (VVHEDNEWGIELV). A linker region spans residues 346-376 (SEVSEEELKNSSGPVPTLPEGITVAYTVPKK). Phosphoserine occurs at positions 357 and 392. The UFC1-binding sequence (UFC) motif lies at 388 to 403 (DSGESLEDLMARMKNM).

It belongs to the ubiquitin-activating E1 family. UBA5 subfamily. In terms of assembly, homodimer; homodimerization is required for UFM1 activation. Interacts (via UIS motif) with UFM1; binds UFM1 via a trans-binding mechanism in which UFM1 interacts with distinct sites in both subunits of the UBA5 homodimer. Interacts (via C-terminus) with UFC1. Interacts (via UIS motif) with GABARAPL2 and, with lower affinity, with GABARAP and GABARAPL1.

The protein resides in the cytoplasm. It localises to the nucleus. The protein localises to the endoplasmic reticulum membrane. It is found in the golgi apparatus. Functionally, E1-like enzyme which specifically catalyzes the first step in ufmylation. Activates UFM1 by first adenylating its C-terminal glycine residue with ATP, and thereafter linking this residue to the side chain of a cysteine residue in E1, yielding a UFM1-E1 thioester and free AMP. Activates UFM1 via a trans-binding mechanism, in which UFM1 interacts with distinct sites in both subunits of the UBA5 homodimer. Trans-binding also promotes stabilization of the UBA5 homodimer, and enhances ATP-binding. Transfer of UFM1 from UBA5 to the E2-like enzyme UFC1 also takes place using a trans mechanism. Ufmylation plays a key role in various processes, such as ribosome recycling, response to DNA damage, interferon response or reticulophagy (also called ER-phagy). Ufmylation is essential for erythroid differentiation of both megakaryocytes and erythrocytes. This Mus musculus (Mouse) protein is Ubiquitin-like modifier-activating enzyme 5.